The primary structure comprises 165 residues: IQSTSMDQGSLSEDSMNSFIRTLIQAGIWKNKVPKQTARTKDGMQTTVKEAEAEPGAVANKGVRLGSQPVVSVDTELLRQQRRFSSPRVLLSENAPLEPPPLYLMEEPMVLNQTSRRKRFAEGKSHRGEYSVCDSESRWVTDKSSAVDIRGHQVTVLGEIRMGSS.

Positions 1-3 (IQS) are cleaved as a signal peptide. A propeptide spanning residues 4 to 119 (TSMDQGSLSE…VLNQTSRRKR (116 aa)) is cleaved from the precursor. Asn112 is a glycosylation site (N-linked (GlcNAc...) asparagine).

It belongs to the NGF-beta family.

The protein localises to the secreted. Functionally, seems to promote the survival of visceral and proprioceptive sensory neurons. The sequence is that of Neurotrophin-3 (NTF3) from Morelia spilota (Carpet python).